The sequence spans 1146 residues: Myosin heavy chain kinase A (1146 aa).

The tract at residues 1–25 is disordered; the sequence is MFNIKKRKESITGIPPINVNSPQSV. Residues 100–120 adopt a coiled-coil conformation; that stretch reads EQMEDQLEKTMKVVRNHTDSL. The tract at residues 158–191 is disordered; sequence IQEKKSTSSPLVKGGISGGGGSGGDDSFDGANIS. Residues 172 to 181 show a composition bias toward gly residues; sequence GISGGGGSGG. 2 coiled-coil regions span residues 187–241 and 297–502; these read GANI…KRIE and SKIE…ASIS. The tract at residues 500–551 is pseudosubstrate/autoinhibitory domain; sequence SISPISSVPKSPITTKRSSIILNSPPMTSQQSSPKIQDLLSSSGSSSVSGIN. The span at 521-534 shows a compositional bias: polar residues; sequence LNSPPMTSQQSSPK. A disordered region spans residues 521-540; that stretch reads LNSPPMTSQQSSPKIQDLLS. Positions 552 to 852 are catalytic; it reads ISSETGEMGI…KVGAKQLPKA (301 aa). One can recognise an Alpha-type protein kinase domain in the interval 564–808; it reads EFDPIINKWI…VCALLDLDVK (245 aa). Position 778–783 (778–783) interacts with ATP; sequence GLGNLG. WD repeat units follow at residues 867–897, 910–938, 952–980, 993–1021, 1033–1061, 1073–1101, and 1114–1142; these read SFRE…RVFD, GHRK…KVHI, GHTG…KVWD, VHTK…YVWD, GHED…KIWD, GHWN…KVWD, and SHSL…KVWE.

Belongs to the protein kinase superfamily. Alpha-type protein kinase family. ALPK subfamily. As to quaternary structure, oligomer. Mg(2+) is required as a cofactor. Mn(2+) serves as cofactor. In terms of processing, the N-terminus is blocked.

It carries out the reaction L-threonyl-[myosin heavy-chain] + ATP = O-phospho-L-threonyl-[myosin heavy-chain] + ADP + H(+). In terms of biological role, catalyzes its autophosphorylation, which is needed for enzymatic activity and phosphorylates myosin II heavy chain at a threonine in the C-terminal tail region. This phosphorylation is critical for regulating the assembly and disassembly of myosin II filament, affecting myosin localization during an array of cellular contractile events, including cytokinesis and capping of cell surface receptors as well as chemotactic cell locomotion. The protein is Myosin heavy chain kinase A (mhkA) of Dictyostelium discoideum (Social amoeba).